A 339-amino-acid polypeptide reads, in one-letter code: Fructose-1,6-bisphosphatase class 1 (339 aa).

The Mg(2+) site is built by glutamate 92, aspartate 114, leucine 116, and aspartate 117. Residues 117-120 (DGSS), asparagine 209, and lysine 275 each bind substrate. Glutamate 281 lines the Mg(2+) pocket.

The protein belongs to the FBPase class 1 family. In terms of assembly, homotetramer. The cofactor is Mg(2+).

It is found in the cytoplasm. The enzyme catalyses beta-D-fructose 1,6-bisphosphate + H2O = beta-D-fructose 6-phosphate + phosphate. It functions in the pathway carbohydrate biosynthesis; gluconeogenesis. This Acidithiobacillus ferrooxidans (strain ATCC 53993 / BNL-5-31) (Leptospirillum ferrooxidans (ATCC 53993)) protein is Fructose-1,6-bisphosphatase class 1.